Reading from the N-terminus, the 577-residue chain is Sensor protein ChvG (577 aa).

Residues 1–29 are Cytoplasmic-facing; sequence MRGQRRWAHPFTLIRRLFGNAVFSSLTRR. A helical transmembrane segment spans residues 30 to 50; it reads IVFFNLVALVVLVGGIMYLNQ. Over 51–260 the chain is Periplasmic; the sequence is FREGLIDARV…DIDKIVHAER (210 aa). The chain crosses the membrane as a helical span at residues 261–281; that stretch reads LAIIRVFGVAALVNVILSLLL. Topologically, residues 282-577 are cytoplasmic; that stretch reads SSTIANPLRR…VLSLPAGPHP (296 aa). An HAMP domain is found at 283 to 339; sequence STIANPLRRLSAAAIRVRRGGAKEREEIPDFSSRQDEIGNLSVALREMTTALYDRIA. The Histidine kinase domain maps to 347 to 575; it reads DVSHELKNPL…RFVLSLPAGP (229 aa). His-350 carries the post-translational modification Phosphohistidine.

In terms of assembly, homodimer.

The protein resides in the cell inner membrane. The catalysed reaction is ATP + protein L-histidine = ADP + protein N-phospho-L-histidine.. It functions in the pathway glycan metabolism; exopolysaccharide biosynthesis. Functionally, member of a two-component regulatory system ChvG(ExoS)/ChvI involved in regulating the production of succinoglycan. Activates ChvI by phosphorylation. This is Sensor protein ChvG (chvG) from Rhizobium meliloti (strain 1021) (Ensifer meliloti).